A 326-amino-acid chain; its full sequence is Acetyl-coenzyme A carboxylase carboxyl transferase subunit beta (326 aa).

One can recognise a CoA carboxyltransferase N-terminal domain in the interval 32–301 (LWTKCPACGV…ILPPLNADSN (270 aa)). Cys36, Cys39, Cys55, and Cys58 together coordinate Zn(2+). Residues 36–58 (CPACGVLTYTKDLQGNWMVCVEC) form a C4-type zinc finger.

It belongs to the AccD/PCCB family. Acetyl-CoA carboxylase is a heterohexamer composed of biotin carboxyl carrier protein (AccB), biotin carboxylase (AccC) and two subunits each of ACCase subunit alpha (AccA) and ACCase subunit beta (AccD). Zn(2+) is required as a cofactor.

The protein localises to the cytoplasm. It carries out the reaction N(6)-carboxybiotinyl-L-lysyl-[protein] + acetyl-CoA = N(6)-biotinyl-L-lysyl-[protein] + malonyl-CoA. The protein operates within lipid metabolism; malonyl-CoA biosynthesis; malonyl-CoA from acetyl-CoA: step 1/1. In terms of biological role, component of the acetyl coenzyme A carboxylase (ACC) complex. Biotin carboxylase (BC) catalyzes the carboxylation of biotin on its carrier protein (BCCP) and then the CO(2) group is transferred by the transcarboxylase to acetyl-CoA to form malonyl-CoA. This chain is Acetyl-coenzyme A carboxylase carboxyl transferase subunit beta, found in Synechocystis sp. (strain ATCC 27184 / PCC 6803 / Kazusa).